A 1390-amino-acid chain; its full sequence is DNA-directed RNA polymerase subunit beta (1390 aa).

The protein belongs to the RNA polymerase beta chain family. In terms of assembly, the RNAP catalytic core consists of 2 alpha, 1 beta, 1 beta' and 1 omega subunit. When a sigma factor is associated with the core the holoenzyme is formed, which can initiate transcription.

The catalysed reaction is RNA(n) + a ribonucleoside 5'-triphosphate = RNA(n+1) + diphosphate. DNA-dependent RNA polymerase catalyzes the transcription of DNA into RNA using the four ribonucleoside triphosphates as substrates. This Rhodopseudomonas palustris (strain HaA2) protein is DNA-directed RNA polymerase subunit beta.